A 201-amino-acid chain; its full sequence is Putative tRNA-binding protein YtpR (201 aa).

A tRNA-binding domain is found at 90 to 200 (VDLSPKFVVG…GDYEAGDAFQ (111 aa)).

This chain is Putative tRNA-binding protein YtpR (ytpR), found in Bacillus subtilis (strain 168).